The chain runs to 326 residues: tRNA uridine(34) hydroxylase (326 aa).

In terms of domain architecture, Rhodanese spans 123-217 (SDPEVLLIDT…YLEEVKPEES (95 aa)). Cys177 serves as the catalytic Cysteine persulfide intermediate. The interval 293 to 326 (KSRGESHIGSDVKQVIEARRQDKVERKQRQHQEG) is disordered.

Belongs to the TrhO family.

The catalysed reaction is uridine(34) in tRNA + AH2 + O2 = 5-hydroxyuridine(34) in tRNA + A + H2O. In terms of biological role, catalyzes oxygen-dependent 5-hydroxyuridine (ho5U) modification at position 34 in tRNAs. The sequence is that of tRNA uridine(34) hydroxylase from Shewanella loihica (strain ATCC BAA-1088 / PV-4).